Here is a 260-residue protein sequence, read N- to C-terminus: MPIIYSLVARGSSVLAEFTSTNGNFVTITRRILDLIPPNDTKMSYVYEKYIFHYLVSDTLTYLCMADEEFGRRIPFTFLDDVKNRFKSMYGDKGKTAIAYGMNSDFSRTLENLMDHYSNTTRVDTMSRTMAEIDEVKNILVSDIAPQLLKRGEKIEMLVERTDTLNQQSFKFKKQSKQLKCAMWWKNVKLMLVLGAIVLIIIFIIVMSYCDGFRSGSKCRSSPSSNSTPTPTPTETPTPTPTPTSTPTPSQLLETLLNQF.

Residues 1–189 lie on the Cytoplasmic side of the membrane; that stretch reads MPIIYSLVAR…KCAMWWKNVK (189 aa). A Longin domain is found at 7-110; the sequence is LVARGSSVLA…GMNSDFSRTL (104 aa). The v-SNARE coiled-coil homology domain maps to 125-186; it reads TMSRTMAEID…KQLKCAMWWK (62 aa). A helical; Anchor for type IV membrane protein transmembrane segment spans residues 190–210; the sequence is LMLVLGAIVLIIIFIIVMSYC. Topologically, residues 211 to 260 are vesicular; that stretch reads DGFRSGSKCRSSPSSNSTPTPTPTETPTPTPTPTSTPTPSQLLETLLNQF. A disordered region spans residues 215–250; that stretch reads SGSKCRSSPSSNSTPTPTPTETPTPTPTPTSTPTPS. The span at 230–246 shows a compositional bias: pro residues; sequence TPTPTETPTPTPTPTST.

The protein belongs to the synaptobrevin family.

The protein resides in the cytoplasmic vesicle. Its subcellular location is the secretory vesicle membrane. It localises to the golgi apparatus. It is found in the trans-Golgi network membrane. The protein localises to the late endosome membrane. The protein resides in the lysosome membrane. Its subcellular location is the endoplasmic reticulum membrane. It localises to the phagosome membrane. Functionally, involved in the targeting and/or fusion of transport vesicles to their target membrane during transport of proteins from the early endosome to the lysosome. Required for heterotypic fusion of late endosomes with lysosomes and homotypic lysosomal fusion. This Dictyostelium discoideum (Social amoeba) protein is Vesicle-associated membrane protein 7B.